The following is a 762-amino-acid chain: Endonuclease MutS2 (762 aa).

Residue 333-340 (GVNAGGKT) coordinates ATP. The region spanning 688–762 (LDLRGQRSEE…GGSGVKIVKL (75 aa)) is the Smr domain.

The protein belongs to the DNA mismatch repair MutS family. MutS2 subfamily. As to quaternary structure, homodimer. Binds to stalled ribosomes, contacting rRNA.

Endonuclease that is involved in the suppression of homologous recombination and thus may have a key role in the control of bacterial genetic diversity. In terms of biological role, acts as a ribosome collision sensor, splitting the ribosome into its 2 subunits. Detects stalled/collided 70S ribosomes which it binds and splits by an ATP-hydrolysis driven conformational change. Acts upstream of the ribosome quality control system (RQC), a ribosome-associated complex that mediates the extraction of incompletely synthesized nascent chains from stalled ribosomes and their subsequent degradation. Probably generates substrates for RQC. This Helicobacter pylori (strain J99 / ATCC 700824) (Campylobacter pylori J99) protein is Endonuclease MutS2.